The following is a 550-amino-acid chain: Calcium-dependent protein kinase 20 (550 aa).

The tract at residues 1-58 (MGNCCVTPEGSGRGRKKQQQEQKQKQKEPKQQQQQQKKGKKPNPFSIEYNRSSAPSGH) is disordered. Gly-2 carries N-myristoyl glycine lipidation. Residues 18-30 (QQQEQKQKQKEPK) show a composition bias toward basic and acidic residues. The 259-residue stretch at 75 to 333 (YELGGELGRG…AQQVLDHPWL (259 aa)) folds into the Protein kinase domain. ATP is bound by residues 81–89 (LGRGEFGVT) and Lys-104. Asp-199 acts as the Proton acceptor in catalysis. Residues 339–369 (APNVNLGETVKARLQQFSVMNKFKKHALRVI) form an autoinhibitory domain region. EF-hand domains follow at residues 376-411 (EEVA…LGHQ), 412-447 (MADA…LRKI), 448-483 (GNDE…DLGA), and 484-519 (NHEE…GTDW). Positions 389, 391, 393, 395, 400, 425, 427, 429, 431, 436, 461, 463, 465, 467, 472, 497, 499, 501, 503, and 508 each coordinate Ca(2+).

It belongs to the protein kinase superfamily. Ser/Thr protein kinase family. CDPK subfamily. In terms of tissue distribution, expressed in roots and leaf blades.

It localises to the membrane. It carries out the reaction L-seryl-[protein] + ATP = O-phospho-L-seryl-[protein] + ADP + H(+). The catalysed reaction is L-threonyl-[protein] + ATP = O-phospho-L-threonyl-[protein] + ADP + H(+). With respect to regulation, activated by calcium. Autophosphorylation may play an important role in the regulation of the kinase activity. Functionally, may play a role in signal transduction pathways that involve calcium as a second messenger. The chain is Calcium-dependent protein kinase 20 from Oryza sativa subsp. japonica (Rice).